The chain runs to 448 residues: tRNA(Ile)-lysidine synthase (448 aa).

27–32 (SGGVDS) is an ATP binding site.

This sequence belongs to the tRNA(Ile)-lysidine synthase family.

Its subcellular location is the cytoplasm. The enzyme catalyses cytidine(34) in tRNA(Ile2) + L-lysine + ATP = lysidine(34) in tRNA(Ile2) + AMP + diphosphate + H(+). Ligates lysine onto the cytidine present at position 34 of the AUA codon-specific tRNA(Ile) that contains the anticodon CAU, in an ATP-dependent manner. Cytidine is converted to lysidine, thus changing the amino acid specificity of the tRNA from methionine to isoleucine. The polypeptide is tRNA(Ile)-lysidine synthase (Vibrio campbellii (strain ATCC BAA-1116)).